We begin with the raw amino-acid sequence, 389 residues long: Globin-like protein 6 (389 aa).

Polar residues predominate over residues 1 to 15 (MGNQSTKSTHGTTRV). Disordered regions lie at residues 1 to 38 (MGNQ…RSAS), 96 to 123 (RTSK…SVDS), and 143 to 185 (TVSS…SSNP). A compositionally biased stretch (basic residues) spans 16–25 (SHSKSAHHNS). Positions 196 to 347 (HLTQPQILFV…VTEQLKEGFQ (152 aa)) constitute a Globin domain. Residues H254 and H286 each coordinate heme b. A disordered region spans residues 367-389 (SSFEISTKTKQSDMKRFHTLDNM). Over residues 376–389 (KQSDMKRFHTLDNM) the composition is skewed to basic and acidic residues.

This sequence belongs to the globin family. In terms of tissue distribution, expressed in the head and tail neurons and nerve cord.

May play a role as physiological sensor for oxygen via redox signaling and/or electron transport. This chain is Globin-like protein 6, found in Caenorhabditis elegans.